The sequence spans 185 residues: Elongation factor P (185 aa).

This sequence belongs to the elongation factor P family.

It localises to the cytoplasm. Its pathway is protein biosynthesis; polypeptide chain elongation. In terms of biological role, involved in peptide bond synthesis. Stimulates efficient translation and peptide-bond synthesis on native or reconstituted 70S ribosomes in vitro. Probably functions indirectly by altering the affinity of the ribosome for aminoacyl-tRNA, thus increasing their reactivity as acceptors for peptidyl transferase. In Bordetella avium (strain 197N), this protein is Elongation factor P.